The sequence spans 250 residues: Glucosamine-6-phosphate deaminase (250 aa).

The active-site Proton acceptor; for enolization step is the Asp-67. Asn-136 functions as the For ring-opening step in the catalytic mechanism. His-138 acts as the Proton acceptor; for ring-opening step in catalysis. Glu-143 functions as the For ring-opening step in the catalytic mechanism.

Belongs to the glucosamine/galactosamine-6-phosphate isomerase family. NagB subfamily.

The catalysed reaction is alpha-D-glucosamine 6-phosphate + H2O = beta-D-fructose 6-phosphate + NH4(+). The protein operates within amino-sugar metabolism; N-acetylneuraminate degradation; D-fructose 6-phosphate from N-acetylneuraminate: step 5/5. Its function is as follows. Catalyzes the reversible isomerization-deamination of glucosamine 6-phosphate (GlcN6P) to form fructose 6-phosphate (Fru6P) and ammonium ion. This is Glucosamine-6-phosphate deaminase from Oceanobacillus iheyensis (strain DSM 14371 / CIP 107618 / JCM 11309 / KCTC 3954 / HTE831).